Here is a 1161-residue protein sequence, read N- to C-terminus: Nardilysin (1161 aa).

A signal peptide spans 1-18; the sequence is MLRRVAVAAVFATGRKLR. 2 disordered regions span residues 42 to 105 and 130 to 218; these read KPFP…KSPS and VEGK…KKTT. A phosphoserine mark is found at S85, S91, and S93. The span at 138-209 shows a compositional bias: acidic residues; the sequence is TDEEEEEEEE…EENELEELEE (72 aa). H244 contributes to the Zn(2+) binding site. E247 serves as the catalytic Proton acceptor. H248 and E325 together coordinate Zn(2+).

Belongs to the peptidase M16 family. Interacts with BACE1 and NRG1. Zn(2+) is required as a cofactor. In terms of tissue distribution, testis, and in a lower level in brain, heart and adrenal glands.

The protein localises to the mitochondrion. Its subcellular location is the cell projection. The protein resides in the dendrite. It carries out the reaction Hydrolysis of polypeptides, preferably at -Xaa-|-Arg-Lys-, and less commonly at -Arg-|-Arg-Xaa-, in which Xaa is not Arg or Lys.. In terms of biological role, cleaves peptide substrates on the N-terminus of arginine residues in dibasic pairs. Is a critical activator of BACE1- and ADAM17-mediated pro-neuregulin ectodomain shedding, involved in the positive regulation of axonal maturation and myelination. Required for proper functioning of 2-oxoglutarate dehydrogenase (OGDH). The chain is Nardilysin from Rattus norvegicus (Rat).